Reading from the N-terminus, the 763-residue chain is Cyclin-F (763 aa).

A Nuclear localization signal 1 motif is present at residues 19–27 (KRRVKRRPR). The region spanning 28–75 (VLTLLSLPEDVLLYVLECLPAVDILSMREVHPHLRSLVDSHSSVWARA) is the F-box domain. The Cyclin N-terminal domain occupies 299 to 411 (INKTSIFTTQ…EIISALEGKI (113 aa)). Short sequence motifs (d box) lie at residues 316–319 (RYIL) and 355–358 (RAKL). Disordered regions lie at residues 574–600 (GSKT…TAEL) and 677–763 (KLEN…SDEL). Residues 575 to 581 (SKTKRRR) carry the Nuclear localization signal 2 motif. Over residues 580 to 590 (RREDSIQEDRG) the composition is skewed to basic and acidic residues. Residues 589–747 (RGSFVTTPTA…LFKASRRQVK (159 aa)) are PEST. Positions 692 to 710 (SSGYSSVSSGGSPTSSSSP) are enriched in low complexity. Over residues 741–751 (ASRRQVKRKNQ) the composition is skewed to basic residues.

This sequence belongs to the cyclin family. Cyclin AB subfamily. In terms of assembly, component of the SCF(CCNF) complex.

Its subcellular location is the nucleus. The protein localises to the cytoplasm. The protein resides in the perinuclear region. It is found in the cytoskeleton. It localises to the microtubule organizing center. Its subcellular location is the centrosome. The protein localises to the centriole. Functionally, substrate recognition component of the SCF(CCNF) E3 ubiquitin-protein ligase complex which mediates the ubiquitination and subsequent proteasomal degradation of target proteins. The SCF(CCNF) E3 ubiquitin-protein ligase complex is an integral component of the ubiquitin proteasome system (UPS) and links proteasome degradation to the cell cycle. Mediates the substrate recognition and the proteasomal degradation of various target proteins during G2 phase involved in the regulation of cell cycle progression and in the maintenance of genome stability. The protein is Cyclin-F (ccnf) of Xenopus tropicalis (Western clawed frog).